Consider the following 1249-residue polypeptide: MAGE-like protein 2 (1249 aa).

A compositionally biased stretch (polar residues) spans 1–10 (MSQLSKNLGD). 10 disordered regions span residues 1-50 (MSQL…PPID), 134-233 (APGA…AQPP), 300-327 (QPPA…QPMA), 349-378 (PQVP…WQAT), 410-433 (RQGP…VRQA), 515-569 (QALP…LPAP), 647-679 (QPFQ…EVPT), 714-746 (LMTP…RAPS), 862-910 (PQAT…DWQG), and 930-957 (VSGD…ILSG). 2 stretches are compositionally biased toward pro residues: residues 40–49 (PPVPWDPPPI) and 140–233 (AHPP…AQPP). Over residues 301 to 311 (PPASGAPMAQP) the composition is skewed to low complexity. Composition is skewed to pro residues over residues 312-324 (AAPP…PPAQ) and 349-358 (PQVPQGPQAP). Polar residues predominate over residues 369–378 (QATSPGWQAT). Residues 410 to 432 (RQGPPPIRPGPPPIRPGPPPVRQ) show a composition bias toward pro residues. Positions 525–552 (QAPQARLPAPQVQAAPQVPTAPPATQVP) are enriched in low complexity. The segment covering 553–567 (AAPPAGPQVPQPVLP) has biased composition (pro residues). The span at 662 to 675 (QLPPQQAQASGPQA) shows a compositional bias: low complexity. The span at 725–746 (SIDRRGSSKERRTSSKERRAPS) shows a compositional bias: basic and acidic residues. The segment covering 862-871 (PQATATTQEA) has biased composition (low complexity). Residues 881–891 (RSGKATRKKKH) show a composition bias toward basic residues. Positions 1020-1219 (LDERANALVQ…QSWPFHYLEA (200 aa)) constitute an MAGE domain. Residues 1226–1235 (EDTDEDEPDT) are compositionally biased toward acidic residues. The disordered stretch occupies residues 1226 to 1249 (EDTDEDEPDTGDSAHGPTSRPPPR).

As to quaternary structure, part of a complex consisting of MAGEL2, TRIM27 and USP7; directly interacts with USP7. Interacts with TRIM27. Interacts with VPS35; leading to recruitment at retromer-containing endosomes. Interacts with BMAL1 and PER2. Expressed in placenta, fetal and adult brain. Not detected in heart and small intestine, very low levels in fibroblasts. Not expressed in brain of a Prader-Willi patient.

It localises to the early endosome. It is found in the cytoplasm. Its subcellular location is the nucleus. Probably enhances ubiquitin ligase activity of RING-type zinc finger-containing E3 ubiquitin-protein ligases, possibly through recruitment and/or stabilization of the Ubl-conjugating enzyme (E2) at the E3:substrate complex. Acts as a regulator of retrograde transport via its interaction with VPS35. Recruited to retromer-containing endosomes and promotes the formation of 'Lys-63'-linked polyubiquitin chains at 'Lys-220' of WASHC1 together with TRIM27, leading to promote endosomal F-actin assembly. Regulates the circadian clock by repressing the transcriptional activator activity of the CLOCK-BMAL1 heterodimer. Significantly promotes the cytoplasmic accumulation of CLOCK. This chain is MAGE-like protein 2 (MAGEL2), found in Homo sapiens (Human).